Reading from the N-terminus, the 430-residue chain is Histidine--tRNA ligase (430 aa).

This sequence belongs to the class-II aminoacyl-tRNA synthetase family. In terms of assembly, homodimer.

It localises to the cytoplasm. It carries out the reaction tRNA(His) + L-histidine + ATP = L-histidyl-tRNA(His) + AMP + diphosphate + H(+). In Chlorobaculum parvum (strain DSM 263 / NCIMB 8327) (Chlorobium vibrioforme subsp. thiosulfatophilum), this protein is Histidine--tRNA ligase.